The chain runs to 38 residues: Photosystem II reaction center protein L (38 aa).

The helical transmembrane segment at S17–F37 threads the bilayer.

It belongs to the PsbL family. In terms of assembly, PSII is composed of 1 copy each of membrane proteins PsbA, PsbB, PsbC, PsbD, PsbE, PsbF, PsbH, PsbI, PsbJ, PsbK, PsbL, PsbM, PsbT, PsbX, PsbY, PsbZ, Psb30/Ycf12, at least 3 peripheral proteins of the oxygen-evolving complex and a large number of cofactors. It forms dimeric complexes.

The protein resides in the plastid. It localises to the chloroplast thylakoid membrane. Functionally, one of the components of the core complex of photosystem II (PSII). PSII is a light-driven water:plastoquinone oxidoreductase that uses light energy to abstract electrons from H(2)O, generating O(2) and a proton gradient subsequently used for ATP formation. It consists of a core antenna complex that captures photons, and an electron transfer chain that converts photonic excitation into a charge separation. This subunit is found at the monomer-monomer interface and is required for correct PSII assembly and/or dimerization. The protein is Photosystem II reaction center protein L of Bowenia serrulata (Byfield fern).